The sequence spans 251 residues: Lactose phosphotransferase system repressor (251 aa).

Residues 3–58 (KYDRLDEITKLVNKRGSVRTNEIVEDLNVSDMTVRRDLAELEEKGVLTKIHGGARS) enclose the HTH deoR-type domain. Residues 20–39 (VRTNEIVEDLNVSDMTVRRD) constitute a DNA-binding region (H-T-H motif).

Its function is as follows. Repressor of the lactose catabolism operon. Galactose-6-phosphate is the inducer. This chain is Lactose phosphotransferase system repressor (lacR), found in Staphylococcus epidermidis (strain ATCC 35984 / DSM 28319 / BCRC 17069 / CCUG 31568 / BM 3577 / RP62A).